The chain runs to 413 residues: Multifunctional CCA protein (413 aa).

ATP-binding residues include Gly-8 and Arg-11. CTP-binding residues include Gly-8 and Arg-11. The Mg(2+) site is built by Asp-21 and Asp-23. 3 residues coordinate ATP: Arg-91, Arg-143, and Arg-146. Arg-91, Arg-143, and Arg-146 together coordinate CTP. An HD domain is found at 232–333 (TGVHVMMVVD…VRLFERSDAL (102 aa)).

The protein belongs to the tRNA nucleotidyltransferase/poly(A) polymerase family. Bacterial CCA-adding enzyme type 1 subfamily. In terms of assembly, monomer. Can also form homodimers and oligomers. The cofactor is Mg(2+). Requires Ni(2+) as cofactor.

It carries out the reaction a tRNA precursor + 2 CTP + ATP = a tRNA with a 3' CCA end + 3 diphosphate. It catalyses the reaction a tRNA with a 3' CCA end + 2 CTP + ATP = a tRNA with a 3' CCACCA end + 3 diphosphate. Catalyzes the addition and repair of the essential 3'-terminal CCA sequence in tRNAs without using a nucleic acid template. Adds these three nucleotides in the order of C, C, and A to the tRNA nucleotide-73, using CTP and ATP as substrates and producing inorganic pyrophosphate. tRNA 3'-terminal CCA addition is required both for tRNA processing and repair. Also involved in tRNA surveillance by mediating tandem CCA addition to generate a CCACCA at the 3' terminus of unstable tRNAs. While stable tRNAs receive only 3'-terminal CCA, unstable tRNAs are marked with CCACCA and rapidly degraded. The polypeptide is Multifunctional CCA protein (Burkholderia cenocepacia (strain HI2424)).